A 502-amino-acid polypeptide reads, in one-letter code: ATP synthase subunit alpha (502 aa).

A disordered region spans residues 115 to 135 (VDGLGPINTTNTRPIESPAPG). 169 to 176 (GDRQTGKT) lines the ATP pocket.

Belongs to the ATPase alpha/beta chains family. As to quaternary structure, F-type ATPases have 2 components, CF(1) - the catalytic core - and CF(0) - the membrane proton channel. CF(1) has five subunits: alpha(3), beta(3), gamma(1), delta(1), epsilon(1). CF(0) has three main subunits: a(1), b(2) and c(9-12). The alpha and beta chains form an alternating ring which encloses part of the gamma chain. CF(1) is attached to CF(0) by a central stalk formed by the gamma and epsilon chains, while a peripheral stalk is formed by the delta and b chains.

It localises to the cell membrane. The catalysed reaction is ATP + H2O + 4 H(+)(in) = ADP + phosphate + 5 H(+)(out). In terms of biological role, produces ATP from ADP in the presence of a proton gradient across the membrane. The alpha chain is a regulatory subunit. In Bacillus cereus (strain B4264), this protein is ATP synthase subunit alpha.